Reading from the N-terminus, the 320-residue chain is Ferrochelatase (320 aa).

Residues histidine 194 and glutamate 275 each contribute to the Fe cation site.

This sequence belongs to the ferrochelatase family. In terms of assembly, monomer.

It is found in the cytoplasm. The enzyme catalyses heme b + 2 H(+) = protoporphyrin IX + Fe(2+). It functions in the pathway porphyrin-containing compound metabolism; protoheme biosynthesis; protoheme from protoporphyrin-IX: step 1/1. Its function is as follows. Catalyzes the ferrous insertion into protoporphyrin IX. This chain is Ferrochelatase, found in Escherichia coli O81 (strain ED1a).